The primary structure comprises 172 residues: MSAQVSLELHHRISQFLFHEASLLDDWKFRDWLAQLDEEIRYTMRTTVNAQTRDRRKGVQPPTTWIFNDTKDQLERRIARLETGMAWAEEPPSRTRHLISNCQVSETDIPNVFAVRVNYLLYRAQKERDETFYVGTRFDKVRRLEDDNWRLLERDIVLDQAVITSHNLSVLF.

It belongs to the bacterial ring-hydroxylating dioxygenase beta subunit family. In terms of assembly, this dioxygenase system consists of four proteins: the two subunits of the hydroxylase component (HcaE and HcaF), a ferredoxin (HcaC) and a ferredoxin reductase (HcaD).

The catalysed reaction is 3-phenylpropanoate + NADH + O2 + H(+) = 3-(cis-5,6-dihydroxycyclohexa-1,3-dien-1-yl)propanoate + NAD(+). The enzyme catalyses (E)-cinnamate + NADH + O2 + H(+) = (2E)-3-(cis-5,6-dihydroxycyclohexa-1,3-dien-1-yl)prop-2-enoate + NAD(+). Its pathway is aromatic compound metabolism; 3-phenylpropanoate degradation. Functionally, part of the multicomponent 3-phenylpropionate dioxygenase. Converts 3-phenylpropionic acid (PP) and cinnamic acid (CI) into 3-phenylpropionate-dihydrodiol (PP-dihydrodiol) and cinnamic acid-dihydrodiol (CI-dihydrodiol), respectively. This chain is 3-phenylpropionate/cinnamic acid dioxygenase subunit beta, found in Escherichia coli O7:K1 (strain IAI39 / ExPEC).